The following is a 179-amino-acid chain: Cytochrome b6-f complex iron-sulfur subunit (179 aa).

Residues 20 to 42 (LLTFGTITGVAAGALYPIVKYFI) traverse the membrane as a helical segment. The region spanning 60-161 (GNDVIVSQFL…ANVTDNDKVV (102 aa)) is the Rieske domain. Residues Cys107, His109, Cys125, and His128 each contribute to the [2Fe-2S] cluster site. Cys112 and Cys127 are joined by a disulfide.

It belongs to the Rieske iron-sulfur protein family. As to quaternary structure, the 4 large subunits of the cytochrome b6-f complex are cytochrome b6, subunit IV (17 kDa polypeptide, PetD), cytochrome f and the Rieske protein, while the 4 small subunits are PetG, PetL, PetM and PetN. The complex functions as a dimer. [2Fe-2S] cluster is required as a cofactor.

The protein resides in the cellular thylakoid membrane. The catalysed reaction is 2 oxidized [plastocyanin] + a plastoquinol + 2 H(+)(in) = 2 reduced [plastocyanin] + a plastoquinone + 4 H(+)(out). Functionally, component of the cytochrome b6-f complex, which mediates electron transfer between photosystem II (PSII) and photosystem I (PSI), cyclic electron flow around PSI, and state transitions. The chain is Cytochrome b6-f complex iron-sulfur subunit from Microcystis aeruginosa (strain NIES-843 / IAM M-2473).